The chain runs to 113 residues: Cell cycle protein GpsB (113 aa).

The stretch at 36–68 forms a coiled coil; the sequence is LDMVIKDYSTFTQEIEALQAENIRLVQELDNAP.

The protein belongs to the GpsB family. In terms of assembly, forms polymers through the coiled coil domains. Interacts with PBP1, MreC and EzrA.

It localises to the cytoplasm. Its function is as follows. Divisome component that associates with the complex late in its assembly, after the Z-ring is formed, and is dependent on DivIC and PBP2B for its recruitment to the divisome. Together with EzrA, is a key component of the system that regulates PBP1 localization during cell cycle progression. Its main role could be the removal of PBP1 from the cell pole after pole maturation is completed. Also contributes to the recruitment of PBP1 to the division complex. Not essential for septum formation. The chain is Cell cycle protein GpsB from Listeria monocytogenes serotype 4b (strain CLIP80459).